Consider the following 771-residue polypeptide: MGWLTRIVCLFWGVLLTARANYQNGKNNVPRLKLSYKEMLESNNVITFNGLANSSSYHTFLLDEERSRLYVGAKDHIFSFDLVNIKDFQKIVWPVSYTRRDECKWAGKDILKECANFIKVLKAYNQTHLYACGTGAFHPICTYIEIGHHPEDNIFKLENSHFENGRGKSPYDPKLLTASLLIDGELYSGTAADFMGRDFAIFRTLGHHHPIRTEQHDSRWLNDPKFISAHLISESDNPEDDKVYFFFRENAIDGEHSGKATHARIGQICKNDFGGHRSLVNKWTTFLKARLICSVPGPNGIDTHFDELQDVFLMNFKDPKNPVVYGVFTTSSNIFKGSAVCMYSMSDVRRVFLGPYAHRDGPNYQWVPYQGRVPYPRPGTCPSKTFGGFDSTKDLPDDVITFARSHPAMYNPVFPMNNRPIVIKTDVNYQFTQIVVDRVDAEDGQYDVMFIGTDVGTVLKVVSIPKETWYDLEEVLLEEMTVFREPTAISAMELSTKQQQLYIGSTAGVAQLPLHRCDIYGKACAECCLARDPYCAWDGSACSRYFPTAKRRTRRQDIRNGDPLTHCSDLHHDNHHGHSPEERIIYGVENSSTFLECSPKSQRALVYWQFQRRNEERKEEIRVDDHIIRTDQGLLLRSLQQKDSGNYLCHAVEHGFIQTLLKVTLEVIDTEHLEELLHKDDDGDGSKTKEMSNSMTPSQKVWYRDFMQLINHPNLNTMDEFCEQVWKRDRKQRRQRPGHTPGNSNKWKHLQENKKGRNRRTHEFERAPRSV.

The signal sequence occupies residues 1–20; the sequence is MGWLTRIVCLFWGVLLTARA. The Sema domain maps to 31–514; the sequence is RLKLSYKEML…STAGVAQLPL (484 aa). N-linked (GlcNAc...) asparagine glycosylation is present at Asn53. A disulfide bond links Cys103 and Cys114. Asn125 carries N-linked (GlcNAc...) asparagine glycosylation. Cystine bridges form between Cys132/Cys141, Cys269/Cys381, Cys293/Cys341, and Cys517/Cys535. In terms of domain architecture, Ig-like C2-type spans 580–664; it reads PEERIIYGVE…GFIQTLLKVT (85 aa). Asn590 carries an N-linked (GlcNAc...) asparagine glycan. Cys649 and Cys722 form a disulfide bridge. The span at 728-737 shows a compositional bias: basic residues; the sequence is RDRKQRRQRP. A disordered region spans residues 728–771; sequence RDRKQRRQRPGHTPGNSNKWKHLQENKKGRNRRTHEFERAPRSV. The segment covering 749-771 has biased composition (basic and acidic residues); the sequence is HLQENKKGRNRRTHEFERAPRSV.

This sequence belongs to the semaphorin family. As to quaternary structure, interacts with PLXND1. Expressed in the dorsal root ganglia.

It is found in the secreted. Functionally, involved in the development of the olfactory system and in neuronal control of puberty. Induces the collapse and paralysis of neuronal growth cones. Could serve as a ligand that guides specific growth cones by a motility-inhibiting mechanism. Binds to the complex neuropilin-1/plexin-1. This is Semaphorin-3A (SEMA3A) from Homo sapiens (Human).